The sequence spans 472 residues: 3-isopropylmalate dehydratase large subunit (472 aa).

Residues Cys349, Cys409, and Cys412 each contribute to the [4Fe-4S] cluster site.

Belongs to the aconitase/IPM isomerase family. LeuC type 1 subfamily. In terms of assembly, heterodimer of LeuC and LeuD. The cofactor is [4Fe-4S] cluster.

The catalysed reaction is (2R,3S)-3-isopropylmalate = (2S)-2-isopropylmalate. The protein operates within amino-acid biosynthesis; L-leucine biosynthesis; L-leucine from 3-methyl-2-oxobutanoate: step 2/4. Its function is as follows. Catalyzes the isomerization between 2-isopropylmalate and 3-isopropylmalate, via the formation of 2-isopropylmaleate. The protein is 3-isopropylmalate dehydratase large subunit of Rhodospirillum rubrum (strain ATCC 11170 / ATH 1.1.1 / DSM 467 / LMG 4362 / NCIMB 8255 / S1).